A 361-amino-acid polypeptide reads, in one-letter code: Velvet complex subunit B (361 aa).

Disordered stretches follow at residues 1-44 (MYAI…GIPS) and 139-161 (SIST…TYAQ). The segment covering 10–26 (PPPPPPLSMDRIPPPSS) has biased composition (pro residues). Residues 54 to 340 (VHEGRIWSLQ…ALQGIKIPIR (287 aa)) enclose the Velvet domain.

The protein belongs to the velvet family. VelB subfamily. In terms of assembly, component of the heterotrimeric velvet complex composed of laeA, veA and velB; VeA acting as a bridging protein between laeA and velB. Forms a heterodimeric complex with vosA; the formation of the velB-vosA complex is light-dependent.

It is found in the nucleus. The protein localises to the cytoplasm. In terms of biological role, component of the velvet transcription factor complex that controls sexual/asexual developmental ratio in response to light, promoting sexual development in the darkness while stimulating asexual sporulation under illumination. The velvet complex acts as a global regulator for secondary metabolite gene expression. Component of the velB-VosA heterodimeric complex that plays a dual role in activating genes associated with spore maturation and repressing certain development-associated genes. The velB-VosA complex binds DNA through the DNA-binding domain of vosA that recognizes an 11-nucleotide consensus sequence 5'-CTGGCCGCGGC-3' consisting of two motifs in the promoters of key developmental regulatory genes. Controls the expression of the aflatoxin gene cluster. Likely coordinates with fluG to modulate sclerotial production. The polypeptide is Velvet complex subunit B (Aspergillus flavus (strain ATCC 200026 / FGSC A1120 / IAM 13836 / NRRL 3357 / JCM 12722 / SRRC 167)).